Reading from the N-terminus, the 160-residue chain is uncharacterized protein (160 aa).

This is an uncharacterized protein from Human cytomegalovirus (strain AD169) (HHV-5).